The following is a 115-amino-acid chain: CRISPR-associated endoribonuclease Cas2 (115 aa).

D22 is a binding site for Mg(2+).

The protein belongs to the CRISPR-associated endoribonuclease Cas2 protein family. Homodimer, forms a heterotetramer with a Cas1 homodimer. Requires Mg(2+) as cofactor.

In terms of biological role, CRISPR (clustered regularly interspaced short palindromic repeat), is an adaptive immune system that provides protection against mobile genetic elements (viruses, transposable elements and conjugative plasmids). CRISPR clusters contain sequences complementary to antecedent mobile elements and target invading nucleic acids. CRISPR clusters are transcribed and processed into CRISPR RNA (crRNA). Functions as a ssRNA-specific endoribonuclease. Involved in the integration of spacer DNA into the CRISPR cassette. This chain is CRISPR-associated endoribonuclease Cas2, found in Flavobacterium psychrophilum (strain ATCC 49511 / DSM 21280 / CIP 103535 / JIP02/86).